A 1501-amino-acid chain; its full sequence is Pleiotropic ABC efflux transporter of multiple drugs CDR1 (1501 aa).

The tract at residues Met1–Asn30 is disordered. The Cytoplasmic portion of the chain corresponds to Met1–Ser513. Residues Ser2–Pro512 form an NBD1 region. Residues Ser8 to Ile18 are compositionally biased toward basic and acidic residues. Residues Leu150 to Gln404 form the ABC transporter 1 domain. The helical transmembrane segment at Ile514–Tyr534 threads the bilayer. Residues Asn535–Ala548 are Extracellular-facing. Residues Ala549–Phe569 traverse the membrane as a helical segment. The Cytoplasmic portion of the chain corresponds to Glu570–Glu597. Residues Leu598–Phe618 form a helical membrane-spanning segment. At Arg619–Pro622 the chain is on the extracellular side. The helical transmembrane segment at Gly623–Phe643 threads the bilayer. Residues Arg644–Ser654 lie on the Cytoplasmic side of the membrane. A helical membrane pass occupies residues Gly655–Ile675. Residues Pro676–Asn764 are Extracellular-facing. Residues Leu765–Phe785 form a helical membrane-spanning segment. Residues Asn786–Gly1195 lie on the Cytoplasmic side of the membrane. Residues Asn786–Gly1195 are NBD2. One can recognise an ABC transporter 2 domain in the interval Phe859–Ala1103. ATP is bound at residue Gly895–Thr902. A coiled-coil region spans residues Arg1137–Asp1164. The helical transmembrane segment at Tyr1196–Phe1216 threads the bilayer. Over Lys1217 to Met1229 the chain is Extracellular. The helical transmembrane segment at Phe1230–Phe1250 threads the bilayer. Over Val1251 to Glu1280 the chain is Cytoplasmic. A helical membrane pass occupies residues Ile1281–Leu1301. The Extracellular segment spans residues Tyr1302 to Arg1314. Residues Gly1315–Leu1335 form a helical membrane-spanning segment. Residues Cys1336–Thr1355 lie on the Cytoplasmic side of the membrane. Residues Met1356 to Phe1376 form a helical membrane-spanning segment. Topologically, residues Met1377–Asn1466 are extracellular. A helical transmembrane segment spans residues Phe1467–Leu1487. Residues Ala1488–Lys1501 are Cytoplasmic-facing.

The protein belongs to the ABC transporter superfamily.

Its subcellular location is the cell membrane. Disulfiram reverses CDR1-mediated drug resistance by interaction with both ATP and substrate-binding sites of the transporter and may be useful for antifungal therapy. In terms of biological role, pleiotropic ABC efflux transporter that confers resistance to numerous chemicals including anisomycin, cycloheximide, fluconazole, miconazole, ketoconazole, itriconazole, nystatin, terbinafine, amorolfine, brefeldin A, amphotericin B, fluphenazine, as well as estrogen. Plays a role in farnesol-induced apoptotic process through glutathione efflux activity. Mediates in-to-out translocation of membrane phospholipids including aminophospholipids and thus regulates asymmetric distribution of phosphatidylethanolamine. Exhibits nucleoside triphosphatase activity. This chain is Pleiotropic ABC efflux transporter of multiple drugs CDR1 (CDR1), found in Candida albicans (strain SC5314 / ATCC MYA-2876) (Yeast).